We begin with the raw amino-acid sequence, 361 residues long: G-protein coupled receptor 52 (361 aa).

Over 1 to 44 (MNESRWTEWRILNMSSSIVNVSEHHSCPLGFGHYSVEDVCIFET) the chain is Extracellular. Asparagine 2, asparagine 13, and asparagine 20 each carry an N-linked (GlcNAc...) asparagine glycan. The helical transmembrane segment at 45–65 (VVIVLLTFLIISGNLTVIFVF) threads the bilayer. Over 66–81 (HCAPLLHHYTTSYFIQ) the chain is Cytoplasmic. Residues 82–102 (TMAYADLLVGVTCLVPTLSLL) traverse the membrane as a helical segment. At 103–115 (HYSTGVHESLTCQ) the chain is on the extracellular side. Residues cysteine 114 and cysteine 193 are joined by a disulfide bond. A helical transmembrane segment spans residues 116–136 (VFGYIISVLKSVSMACLACIS). The Cytoplasmic segment spans residues 137-159 (VDRYLAITKPLSYNQLVTPCRLR). Residues 160–180 (ICIIMIWIYSCLIFLPSFFGW) traverse the membrane as a helical segment. The Extracellular segment spans residues 181–205 (GKPGYHGDIFEWCATSWLTSAYFTC). A helical membrane pass occupies residues 206–226 (FIVCLLYAPAALVVCFTYFHI). The Cytoplasmic portion of the chain corresponds to 227–265 (FKICRQHTKEINDRRARFPSHEVEASREAGHSPDRRYAM). The helical transmembrane segment at 266-286 (VLFRITSVFYMLWLPYIIYFL) threads the bilayer. The Extracellular segment spans residues 287-296 (LESSRVLDNP). The helical transmembrane segment at 297–317 (TLSFLTTWLAISNSFCNCVIY) threads the bilayer. The Cytoplasmic segment spans residues 318–361 (SLSNSVFRLGLRRLSETMCTSCVCAKDQEAQDPKPRRRANSCSI).

The protein belongs to the G-protein coupled receptor 1 family. In terms of tissue distribution, expressed in brain, especially in striatum. Expressed in the striatum, nucleus accumbens, and lateral globus pallidus.

The protein resides in the cell membrane. In terms of biological role, G- protein coupled receptor activated by antipsychotics reserpine leading to an increase in intracellular cAMP and its internalization. May play a role in locomotor activity through modulation of dopamine, NMDA and ADORA2A-induced locomotor activity. These behavioral changes are accompanied by modulation of the dopamine receptor signaling pathway in striatum. Modulates HTT level via cAMP-dependent but PKA independent mechanisms throught activation of RAB39B that translocates HTT to the endoplasmic reticulum, thus avoiding proteasome degradation. The polypeptide is G-protein coupled receptor 52 (Mus musculus (Mouse)).